The primary structure comprises 880 residues: DNA mismatch repair protein MutS (880 aa).

625–632 (GPNMAGKS) contacts ATP.

It belongs to the DNA mismatch repair MutS family.

In terms of biological role, this protein is involved in the repair of mismatches in DNA. It is possible that it carries out the mismatch recognition step. This protein has a weak ATPase activity. This is DNA mismatch repair protein MutS from Alkaliphilus oremlandii (strain OhILAs) (Clostridium oremlandii (strain OhILAs)).